The chain runs to 370 residues: Anhydro-N-acetylmuramic acid kinase (370 aa).

13–20 (GTSLDGVD) provides a ligand contact to ATP.

Belongs to the anhydro-N-acetylmuramic acid kinase family.

The enzyme catalyses 1,6-anhydro-N-acetyl-beta-muramate + ATP + H2O = N-acetyl-D-muramate 6-phosphate + ADP + H(+). Its pathway is amino-sugar metabolism; 1,6-anhydro-N-acetylmuramate degradation. The protein operates within cell wall biogenesis; peptidoglycan recycling. In terms of biological role, catalyzes the specific phosphorylation of 1,6-anhydro-N-acetylmuramic acid (anhMurNAc) with the simultaneous cleavage of the 1,6-anhydro ring, generating MurNAc-6-P. Is required for the utilization of anhMurNAc either imported from the medium or derived from its own cell wall murein, and thus plays a role in cell wall recycling. This Vibrio cholerae serotype O1 (strain ATCC 39315 / El Tor Inaba N16961) protein is Anhydro-N-acetylmuramic acid kinase.